Reading from the N-terminus, the 672-residue chain is Serine/threonine-protein kinase ppk16 (672 aa).

The Protein kinase domain occupies 31–279 (YRIESVVGEG…IDQIISHPYF (249 aa)). ATP is bound by residues 37–45 (VGEGSFGKV) and Lys60. The active-site Proton acceptor is the Asp148. Ser231 carries the phosphoserine modification. Residues 375–384 (VSVMSNNQDS) are compositionally biased toward polar residues. Disordered stretches follow at residues 375-396 (VSVMSNNQDSLKSRHTSSDSSN), 416-436 (DTLSSSAIRPRTPSPSAENYL), 464-572 (NSFG…YSNV), and 632-672 (SGRK…TDLL). Positions 472-487 (NLPQTTHVDTGEQNTP) are enriched in polar residues. A compositionally biased stretch (low complexity) spans 508 to 523 (SNSQNSPSKSSNLSIN). Over residues 531–541 (LQNTVISPQPT) the composition is skewed to polar residues. Composition is skewed to low complexity over residues 549 to 572 (RSLSGRSSVASSRNSSRTRSYSNV) and 639 to 649 (SSSSLMFNQSS).

Belongs to the protein kinase superfamily. Ser/Thr protein kinase family.

It is found in the cytoplasm. It catalyses the reaction L-seryl-[protein] + ATP = O-phospho-L-seryl-[protein] + ADP + H(+). The catalysed reaction is L-threonyl-[protein] + ATP = O-phospho-L-threonyl-[protein] + ADP + H(+). Has a role in meiosis. The sequence is that of Serine/threonine-protein kinase ppk16 (ppk16) from Schizosaccharomyces pombe (strain 972 / ATCC 24843) (Fission yeast).